We begin with the raw amino-acid sequence, 287 residues long: uncharacterized protein (287 aa).

10 consecutive transmembrane segments (helical) span residues 4 to 24, 36 to 56, 66 to 86, 93 to 113, 122 to 142, 148 to 168, 179 to 199, 208 to 228, 237 to 259, and 264 to 286; these read TTNGWINGFIGVLIFSGSLPA, FLTVCRAAIAGVLAGGLLLIF, LISLLVVAFGVVIGFPLLTAL, SAHAIVFIGLLPLATAVFGVL, VFWIFSAAGSLLVAGFALIQG, LGDAYMLASIVVCGLGYAEGA, VISWALVLSLPLMLPLSFFFT, VPALLSLAYVSLFSMLIGFVF, GIAAVGQLQLLQPFFGLLLASVI, and VGWALVAVNIAVIMCVAAARRFA. EamA domains lie at 16 to 139 and 158 to 284; these read LIFS…GFAL and VVCG…AARR.

Belongs to the EamA transporter family.

The protein localises to the cell membrane. This is an uncharacterized protein from Bacillus subtilis (strain 168).